The primary structure comprises 119 residues: Beta-2-microglobulin (119 aa).

An N-terminal signal peptide occupies residues 1–20 (MARFVVVALLALLSLSGLEA). One can recognise an Ig-like C1-type domain in the interval 25-114 (PKIQVYSRHP…VTFPTPKTVK (90 aa)). Cys45 and Cys100 are oxidised to a cystine.

This sequence belongs to the beta-2-microglobulin family. In terms of assembly, heterodimer of an alpha chain and a beta chain. Beta-2-microglobulin is the beta-chain of major histocompatibility complex class I molecules.

It is found in the secreted. Functionally, component of the class I major histocompatibility complex (MHC). Involved in the presentation of peptide antigens to the immune system. The polypeptide is Beta-2-microglobulin (B2M) (Alouatta seniculus (Red howler monkey)).